Reading from the N-terminus, the 113-residue chain is Iron-sulfur cluster insertion protein ErpA (113 aa).

Iron-sulfur cluster contacts are provided by Cys-41, Cys-105, and Cys-107.

It belongs to the HesB/IscA family. In terms of assembly, homodimer. Requires iron-sulfur cluster as cofactor.

In terms of biological role, required for insertion of 4Fe-4S clusters for at least IspG. The chain is Iron-sulfur cluster insertion protein ErpA from Actinobacillus succinogenes (strain ATCC 55618 / DSM 22257 / CCUG 43843 / 130Z).